The primary structure comprises 361 residues: MLLALSQWIAEDIRAFNVFSYITLRTMLAALTALSISFLIGPAMIRSLTARKVGQSVRNDGPQSHLIKAGTPTMGGTLILTAVIVTTLLWADLSNRYIWVVSLTTLGFGAIGWVDDYRKVIQRNSKGLSASSKFFWQSIIALLVAVYLAMTADLPQHTEMIVPFFKEVAIPLGTFLFIVLTYLVIVGTSNAVNLTDGLDGLAIMPTVMISGALAIFAYVAGHAVFAKYLGIPHIPNAGELAVFCGALTGAGLAFLWFNTYPAEVFMGDVGALALGAALGVITVIVRQEIVLVIMGGVFVMEALSVMIQVASYKLFGQRVFRMAPLHHHYELKGWKENQVVVRFWIITLILVLIGLSTLKLR.

Helical transmembrane passes span 28-48, 73-93, 97-117, 134-154, 168-188, 200-220, 237-257, 264-284, 289-309, and 338-358; these read LAALTALSISFLIGPAMIRSL, TMGGTLILTAVIVTTLLWADL, YIWVVSLTTLGFGAIGWVDDY, FFWQSIIALLVAVYLAMTADL, VAIPLGTFLFIVLTYLVIVGT, GLAIMPTVMISGALAIFAYVA, AGELAVFCGALTGAGLAFLWF, VFMGDVGALALGAALGVITVI, IVLVIMGGVFVMEALSVMIQV, and QVVVRFWIITLILVLIGLSTL.

The protein belongs to the glycosyltransferase 4 family. MraY subfamily. Mg(2+) serves as cofactor.

Its subcellular location is the cell inner membrane. The catalysed reaction is UDP-N-acetyl-alpha-D-muramoyl-L-alanyl-gamma-D-glutamyl-meso-2,6-diaminopimeloyl-D-alanyl-D-alanine + di-trans,octa-cis-undecaprenyl phosphate = di-trans,octa-cis-undecaprenyl diphospho-N-acetyl-alpha-D-muramoyl-L-alanyl-D-glutamyl-meso-2,6-diaminopimeloyl-D-alanyl-D-alanine + UMP. It functions in the pathway cell wall biogenesis; peptidoglycan biosynthesis. In terms of biological role, catalyzes the initial step of the lipid cycle reactions in the biosynthesis of the cell wall peptidoglycan: transfers peptidoglycan precursor phospho-MurNAc-pentapeptide from UDP-MurNAc-pentapeptide onto the lipid carrier undecaprenyl phosphate, yielding undecaprenyl-pyrophosphoryl-MurNAc-pentapeptide, known as lipid I. The polypeptide is Phospho-N-acetylmuramoyl-pentapeptide-transferase (Nitrosomonas europaea (strain ATCC 19718 / CIP 103999 / KCTC 2705 / NBRC 14298)).